The primary structure comprises 247 residues: Cobalt transport protein CbiM (247 aa).

Positions 1–21 are cleaved as a signal peptide; it reads MVGWGVLILLMVLWLPRQAYA. A run of 7 helical transmembrane segments spans residues 27-47, 64-84, 96-116, 119-139, 159-179, 181-201, and 202-222; these read GYLP…ALIL, LVLA…LPSV, LGAV…ILLF, LLLA…MAVV, GVAV…TTSL, LALA…KFAS, and IFAV…VIMV.

The protein belongs to the CbiM family. In terms of assembly, forms an energy-coupling factor (ECF) transporter complex composed of an ATP-binding protein (A component, CbiO), a transmembrane protein (T component, CbiQ) and 2 possible substrate-capture proteins (S components, CbiM and CbiN) of unknown stoichimetry.

The protein resides in the cell membrane. It functions in the pathway cofactor biosynthesis; adenosylcobalamin biosynthesis. In terms of biological role, part of the energy-coupling factor (ECF) transporter complex CbiMNOQ involved in cobalt import. In Kyrpidia tusciae (strain DSM 2912 / NBRC 15312 / T2) (Bacillus tusciae), this protein is Cobalt transport protein CbiM.